Reading from the N-terminus, the 237-residue chain is Sugar fermentation stimulation protein homolog (237 aa).

The protein belongs to the SfsA family.

This Pseudomonas fluorescens (strain Pf0-1) protein is Sugar fermentation stimulation protein homolog.